Consider the following 944-residue polypeptide: Protocadherin gamma-C5 (944 aa).

An N-terminal signal peptide occupies residues 1-29 (MGPKTLPQLAGKWQVLCMLSLCCWGWVSG). 6 Cadherin domains span residues 30–133 (QLRY…SPSF), 134–242 (ATPE…APTF), 243–350 (QSSV…APEV), 351–454 (LLAS…APRF), 455–564 (NQQL…APAV), and 571–677 (WEHS…MPKS). The Extracellular segment spans residues 30 to 693 (QLRYSVVEES…PPERSDLTLY (664 aa)). 3 N-linked (GlcNAc...) asparagine glycosylation sites follow: Asn265, Asn443, and Asn547. Residues 694–714 (LIVALATVSLLSLVTFTFLSA) form a helical membrane-spanning segment. Residues 715–944 (KCLQGNADGD…KKKSGKKEKK (230 aa)) are Cytoplasmic-facing. Disordered stretches follow at residues 722–747 (DGDGGGGQCCRRQDSPSPDFYKQSSP), 812–853 (SNTL…WPNN), and 914–944 (ATLTNAAGKRDGKAPAGGNGNKKKSGKKEKK). The segment covering 820–853 (QQAPPNTDWRFSQAQRPGTSGSQNGDDTGTWPNN) has biased composition (polar residues). Positions 934–944 (NKKKSGKKEKK) are enriched in basic residues.

It localises to the cell membrane. In terms of biological role, potential calcium-dependent cell-adhesion protein. May be involved in the establishment and maintenance of specific neuronal connections in the brain. The chain is Protocadherin gamma-C5 (PCDHGC5) from Pan troglodytes (Chimpanzee).